The chain runs to 555 residues: Sesquiterpene synthase 31 (555 aa).

Residues Asp-308, Asp-312, Asp-451, Thr-455, and Glu-459 each contribute to the Mg(2+) site. A DDXXD motif motif is present at residues 308–312 (DDTFD).

This sequence belongs to the terpene synthase family. Tpsa subfamily. It depends on Mg(2+) as a cofactor. The cofactor is Mn(2+). In terms of tissue distribution, expressed in stem and leaf trichomes. Detected in roots, fruits and flowers.

It is found in the cytoplasm. It carries out the reaction (2E,6E)-farnesyl diphosphate = viridiflorene + diphosphate. It participates in secondary metabolite biosynthesis; terpenoid biosynthesis. In terms of biological role, sesquiterpene synthase involved in the production of viridiflorene from (E,E)-farnesyl diphosphate (FPP). Has no activity with (Z,Z)-FPP. Can act with a low efficiency as a monoterpene synthase with geranyl diphosphate as substrate. This is Sesquiterpene synthase 31 from Solanum lycopersicum (Tomato).